A 317-amino-acid chain; its full sequence is tRNA dimethylallyltransferase (317 aa).

14 to 21 (GPTAVGKT) provides a ligand contact to ATP. Residue 16 to 21 (TAVGKT) coordinates substrate. The interaction with substrate tRNA stretch occupies residues 39–42 (DSMQ).

This sequence belongs to the IPP transferase family. Monomer. It depends on Mg(2+) as a cofactor.

It catalyses the reaction adenosine(37) in tRNA + dimethylallyl diphosphate = N(6)-dimethylallyladenosine(37) in tRNA + diphosphate. Functionally, catalyzes the transfer of a dimethylallyl group onto the adenine at position 37 in tRNAs that read codons beginning with uridine, leading to the formation of N6-(dimethylallyl)adenosine (i(6)A). The polypeptide is tRNA dimethylallyltransferase (Bacillus cereus (strain G9842)).